Consider the following 156-residue polypeptide: tRNA (cytidine(34)-2'-O)-methyltransferase (156 aa).

Residues Gly-102, Leu-124, and Ser-132 each contribute to the S-adenosyl-L-methionine site.

It belongs to the class IV-like SAM-binding methyltransferase superfamily. RNA methyltransferase TrmH family. TrmL subfamily. Homodimer.

It is found in the cytoplasm. The catalysed reaction is cytidine(34) in tRNA + S-adenosyl-L-methionine = 2'-O-methylcytidine(34) in tRNA + S-adenosyl-L-homocysteine + H(+). It catalyses the reaction 5-carboxymethylaminomethyluridine(34) in tRNA(Leu) + S-adenosyl-L-methionine = 5-carboxymethylaminomethyl-2'-O-methyluridine(34) in tRNA(Leu) + S-adenosyl-L-homocysteine + H(+). Its function is as follows. Methylates the ribose at the nucleotide 34 wobble position in the two leucyl isoacceptors tRNA(Leu)(CmAA) and tRNA(Leu)(cmnm5UmAA). Catalyzes the methyl transfer from S-adenosyl-L-methionine to the 2'-OH of the wobble nucleotide. The chain is tRNA (cytidine(34)-2'-O)-methyltransferase from Burkholderia pseudomallei (strain 1106a).